The primary structure comprises 185 residues: Lactoylglutathione lyase (185 aa).

The disordered stretch occupies residues 1–21 (MASEAKESPANNPGLSTVRDE). The VOC domain occupies 27–174 (IMQQTMFRVK…DGYWIEIFDL (148 aa)). Glutamine 30 and arginine 34 together coordinate substrate. Zn(2+) is bound at residue glutamine 30. Position 96 (glutamate 96) interacts with Zn(2+). Residues asparagine 100, arginine 120, histidine 124, and 154–155 (KM) each bind substrate. Histidine 124 contacts Zn(2+). Glutamate 170 provides a ligand contact to Zn(2+). The Proton donor/acceptor role is filled by glutamate 170.

It belongs to the glyoxalase I family. Zn(2+) serves as cofactor.

The enzyme catalyses (R)-S-lactoylglutathione = methylglyoxal + glutathione. The protein operates within secondary metabolite metabolism; methylglyoxal degradation; (R)-lactate from methylglyoxal: step 1/2. Its function is as follows. Catalyzes the conversion of hemimercaptal, formed from methylglyoxal and glutathione, to S-lactoylglutathione. The polypeptide is Lactoylglutathione lyase (GLY I) (Brassica juncea (Indian mustard)).